The sequence spans 115 residues: Envelope glycoprotein N (115 aa).

A signal peptide spans 1 to 27; that stretch reads MWLLRPAGSNFIVALIVLACAGPLTCS. The Virion surface portion of the chain corresponds to 28–77; the sequence is AQLDAGILNPWGSAGHNDAVMPGMFANSESDERFYSPHCSSRGLPLVNES. The helical transmembrane segment at 78–98 threads the bilayer; that stretch reads MASVIFFLSLAMVCVAIVAIL. Over 99 to 115 the chain is Intravirion; it reads YNCCFNSFKNSVINSRW.

The protein belongs to the herpesviridae glycoprotein N family. In terms of assembly, interacts (via N-terminus) with gM (via N-terminus). The gM-gN heterodimer forms the gCII complex.

The protein resides in the virion membrane. It is found in the host membrane. Its subcellular location is the host Golgi apparatus. The protein localises to the host trans-Golgi network. Envelope glycoprotein necessary for proper maturation of gM and modulation of its membrane fusion activity. Also plays a critical role in virion morphogenesis. The chain is Envelope glycoprotein N from Psittacid herpesvirus 1 (isolate Amazon parrot/-/97-0001/1997) (PsHV-1).